We begin with the raw amino-acid sequence, 580 residues long: Glutathione hydrolase proenzyme (580 aa).

The first 25 residues, 1 to 25 (MIKPTFLRRVAIAALLSGSCFSAAA), serve as a signal peptide directing secretion. An L-glutamate-binding site is contributed by arginine 114. Residue threonine 391 is the Nucleophile of the active site. L-glutamate-binding positions include threonine 409, asparagine 411, glutamine 430, aspartate 433, 462-463 (SS), and 483-484 (GG). The interval 561–580 (DGELYGASDPRSVDDLTAGY) is disordered.

This sequence belongs to the gamma-glutamyltransferase family. In terms of assembly, this enzyme consists of two polypeptide chains, which are synthesized in precursor form from a single polypeptide. In terms of processing, cleaved by autocatalysis into a large and a small subunit.

It localises to the periplasm. The enzyme catalyses an N-terminal (5-L-glutamyl)-[peptide] + an alpha-amino acid = 5-L-glutamyl amino acid + an N-terminal L-alpha-aminoacyl-[peptide]. It catalyses the reaction glutathione + H2O = L-cysteinylglycine + L-glutamate. It carries out the reaction an S-substituted glutathione + H2O = an S-substituted L-cysteinylglycine + L-glutamate. It functions in the pathway sulfur metabolism; glutathione metabolism. Transferase and hydrolase activities are inhibited by L-Ala and L-Gln, and also by GGT affinity labeling reagents such as azaserine and 6-diazo-5-oxo-nor-leucine. In terms of biological role, cleaves the gamma-glutamyl bond of periplasmic glutathione (gamma-Glu-Cys-Gly), glutathione conjugates, and other gamma-glutamyl compounds. The metabolism of glutathione releases free glutamate and the dipeptide cysteinyl-glycine, which is hydrolyzed to cysteine and glycine by dipeptidases; it may function in amino acid uptake/salvage, or possibly in peptidoglycan linkage. Catalyzes the hydrolysis and transpeptidation of many gamma-glutamyl compounds (including some D-gamma-glutamyl substrates), with a preference for basic and aromatic amino acids as acceptors. The KM values for gamma-glutamyl acceptors are so high that it has been proposed transpeptidation is not the physiological role in E.coli. The chain is Glutathione hydrolase proenzyme (ggt) from Escherichia coli (strain K12).